The primary structure comprises 125 residues: Small ribosomal subunit protein eS6 (125 aa).

It belongs to the eukaryotic ribosomal protein eS6 family.

The polypeptide is Small ribosomal subunit protein eS6 (Thermococcus onnurineus (strain NA1)).